A 341-amino-acid polypeptide reads, in one-letter code: DNA-directed RNA polymerase subunit alpha (341 aa).

The segment at 1–226 (MLIAQRPTIT…ELFGLVRELN (226 aa)) is alpha N-terminal domain (alpha-NTD). Residues 241-341 (AALAADLALP…DQRYIETEQL (101 aa)) are alpha C-terminal domain (alpha-CTD).

It belongs to the RNA polymerase alpha chain family. Homodimer. The RNAP catalytic core consists of 2 alpha, 1 beta, 1 beta' and 1 omega subunit. When a sigma factor is associated with the core the holoenzyme is formed, which can initiate transcription.

The enzyme catalyses RNA(n) + a ribonucleoside 5'-triphosphate = RNA(n+1) + diphosphate. DNA-dependent RNA polymerase catalyzes the transcription of DNA into RNA using the four ribonucleoside triphosphates as substrates. The chain is DNA-directed RNA polymerase subunit alpha from Acidothermus cellulolyticus (strain ATCC 43068 / DSM 8971 / 11B).